The following is a 245-amino-acid chain: Carbohydrate deacetylase (245 aa).

2 residues coordinate Mg(2+): H59 and H125.

The protein belongs to the YdjC deacetylase family. As to quaternary structure, homodimer. The cofactor is Mg(2+).

In terms of biological role, probably catalyzes the deacetylation of acetylated carbohydrates an important step in the degradation of oligosaccharides. The protein is Carbohydrate deacetylase of Listeria monocytogenes serotype 4b (strain CLIP80459).